The primary structure comprises 523 residues: GMP synthase [glutamine-hydrolyzing] (523 aa).

The Glutamine amidotransferase type-1 domain maps to 8–205 (KILILDFGSQ…VVDICGCETN (198 aa)). The active-site Nucleophile is Cys-85. Active-site residues include His-179 and Glu-181. The 193-residue stretch at 206 to 398 (WTAENIIEDA…LGLPAEMLNR (193 aa)) folds into the GMPS ATP-PPase domain. 233–239 (SGGVDSS) is an ATP binding site.

As to quaternary structure, homodimer.

It catalyses the reaction XMP + L-glutamine + ATP + H2O = GMP + L-glutamate + AMP + diphosphate + 2 H(+). It participates in purine metabolism; GMP biosynthesis; GMP from XMP (L-Gln route): step 1/1. Its function is as follows. Catalyzes the synthesis of GMP from XMP. In Histophilus somni (strain 2336) (Haemophilus somnus), this protein is GMP synthase [glutamine-hydrolyzing].